Here is a 461-residue protein sequence, read N- to C-terminus: Bifunctional protein GlmU (461 aa).

The pyrophosphorylase stretch occupies residues 1 to 227; it reads MEVIALILAA…PDEVLGVNDR (227 aa). Residues 8-11, K22, Q73, 78-79, 100-102, G137, E152, N167, and N225 each bind UDP-N-acetyl-alpha-D-glucosamine; these read LAAG, GT, and YGD. A Mg(2+)-binding site is contributed by D102. N225 lines the Mg(2+) pocket. A linker region spans residues 228 to 248; sequence RQLAELERIYQVHQARALMER. Positions 249–461 are N-acetyltransferase; that stretch reads GVTLRDPARF…EKARKESCAE (213 aa). UDP-N-acetyl-alpha-D-glucosamine-binding residues include R332 and K350. H362 functions as the Proton acceptor in the catalytic mechanism. Residues Y365 and N376 each contribute to the UDP-N-acetyl-alpha-D-glucosamine site. Acetyl-CoA is bound by residues A379, 385–386, S404, A422, and R439; that span reads NY.

This sequence in the N-terminal section; belongs to the N-acetylglucosamine-1-phosphate uridyltransferase family. It in the C-terminal section; belongs to the transferase hexapeptide repeat family. In terms of assembly, homotrimer. Mg(2+) is required as a cofactor.

The protein localises to the cytoplasm. The enzyme catalyses alpha-D-glucosamine 1-phosphate + acetyl-CoA = N-acetyl-alpha-D-glucosamine 1-phosphate + CoA + H(+). The catalysed reaction is N-acetyl-alpha-D-glucosamine 1-phosphate + UTP + H(+) = UDP-N-acetyl-alpha-D-glucosamine + diphosphate. The protein operates within nucleotide-sugar biosynthesis; UDP-N-acetyl-alpha-D-glucosamine biosynthesis; N-acetyl-alpha-D-glucosamine 1-phosphate from alpha-D-glucosamine 6-phosphate (route II): step 2/2. It participates in nucleotide-sugar biosynthesis; UDP-N-acetyl-alpha-D-glucosamine biosynthesis; UDP-N-acetyl-alpha-D-glucosamine from N-acetyl-alpha-D-glucosamine 1-phosphate: step 1/1. Its pathway is bacterial outer membrane biogenesis; LPS lipid A biosynthesis. Functionally, catalyzes the last two sequential reactions in the de novo biosynthetic pathway for UDP-N-acetylglucosamine (UDP-GlcNAc). The C-terminal domain catalyzes the transfer of acetyl group from acetyl coenzyme A to glucosamine-1-phosphate (GlcN-1-P) to produce N-acetylglucosamine-1-phosphate (GlcNAc-1-P), which is converted into UDP-GlcNAc by the transfer of uridine 5-monophosphate (from uridine 5-triphosphate), a reaction catalyzed by the N-terminal domain. In Methylococcus capsulatus (strain ATCC 33009 / NCIMB 11132 / Bath), this protein is Bifunctional protein GlmU.